The following is a 309-amino-acid chain: tRNA dimethylallyltransferase (309 aa).

Residue 8–15 (GPTATGKS) participates in ATP binding. Substrate is bound at residue 10–15 (TATGKS). The interval 33–36 (DSRQ) is interaction with substrate tRNA.

Belongs to the IPP transferase family. Monomer. It depends on Mg(2+) as a cofactor.

The catalysed reaction is adenosine(37) in tRNA + dimethylallyl diphosphate = N(6)-dimethylallyladenosine(37) in tRNA + diphosphate. Its function is as follows. Catalyzes the transfer of a dimethylallyl group onto the adenine at position 37 in tRNAs that read codons beginning with uridine, leading to the formation of N6-(dimethylallyl)adenosine (i(6)A). The protein is tRNA dimethylallyltransferase of Trichodesmium erythraeum (strain IMS101).